Consider the following 37-residue polypeptide: Large ribosomal subunit protein bL36A (37 aa).

It belongs to the bacterial ribosomal protein bL36 family.

This chain is Large ribosomal subunit protein bL36A, found in Arthrobacter sp. (strain FB24).